A 356-amino-acid polypeptide reads, in one-letter code: 3-dehydroquinate synthase (356 aa).

NAD(+)-binding positions include 106 to 110 (GVVGD), 130 to 131 (TT), lysine 143, and lysine 152. The Zn(2+) site is built by glutamate 185, histidine 248, and histidine 265.

This sequence belongs to the sugar phosphate cyclases superfamily. Dehydroquinate synthase family. It depends on NAD(+) as a cofactor. Requires Co(2+) as cofactor. The cofactor is Zn(2+).

It is found in the cytoplasm. The catalysed reaction is 7-phospho-2-dehydro-3-deoxy-D-arabino-heptonate = 3-dehydroquinate + phosphate. It functions in the pathway metabolic intermediate biosynthesis; chorismate biosynthesis; chorismate from D-erythrose 4-phosphate and phosphoenolpyruvate: step 2/7. Catalyzes the conversion of 3-deoxy-D-arabino-heptulosonate 7-phosphate (DAHP) to dehydroquinate (DHQ). This chain is 3-dehydroquinate synthase, found in Caldanaerobacter subterraneus subsp. tengcongensis (strain DSM 15242 / JCM 11007 / NBRC 100824 / MB4) (Thermoanaerobacter tengcongensis).